We begin with the raw amino-acid sequence, 237 residues long: Purine nucleoside phosphorylase DeoD-type (237 aa).

Histidine 4 provides a ligand contact to a purine D-ribonucleoside. Phosphate is bound by residues glycine 20, arginine 24, arginine 43, and 87-90 (RVGT). Residues 179–181 (EME) and 203–204 (SD) each bind a purine D-ribonucleoside. The active-site Proton donor is the aspartate 204.

The protein belongs to the PNP/UDP phosphorylase family. In terms of assembly, homohexamer; trimer of homodimers.

The catalysed reaction is a purine D-ribonucleoside + phosphate = a purine nucleobase + alpha-D-ribose 1-phosphate. The enzyme catalyses a purine 2'-deoxy-D-ribonucleoside + phosphate = a purine nucleobase + 2-deoxy-alpha-D-ribose 1-phosphate. Functionally, catalyzes the reversible phosphorolytic breakdown of the N-glycosidic bond in the beta-(deoxy)ribonucleoside molecules, with the formation of the corresponding free purine bases and pentose-1-phosphate. The chain is Purine nucleoside phosphorylase DeoD-type from Clostridium beijerinckii (strain ATCC 51743 / NCIMB 8052) (Clostridium acetobutylicum).